A 599-amino-acid polypeptide reads, in one-letter code: Tail knob protein gp9 (599 aa).

Belongs to the picovirinae distal tube protein family. As to quaternary structure, homohexamer; forms a hexameric tube structure with six flexible hydrophobic loops.

It localises to the virion. Functionally, distal (knob) tail protein that plugs the end of the tube before DNA ejection and forms a channel perforating the host membrane during ejection. The chain is Tail knob protein gp9 (9) from Bacillus phage PZA (Bacteriophage PZA).